The chain runs to 274 residues: Large ribosomal subunit protein uL2cz/uL2cy (274 aa).

Disordered stretches follow at residues 1-22 (MAIHLYKTSTPSTRNGAVDSQV) and 223-274 (MNPV…RRTK).

It belongs to the universal ribosomal protein uL2 family. As to quaternary structure, part of the 50S ribosomal subunit.

The protein resides in the plastid. The protein localises to the chloroplast. The sequence is that of Large ribosomal subunit protein uL2cz/uL2cy (rpl2-A) from Phaseolus vulgaris (Kidney bean).